The following is a 627-amino-acid chain: Hemocyanin D chain (627 aa).

Cu cation contacts are provided by His-171, His-175, His-202, His-322, His-326, and His-362. The N-linked (GlcNAc...) asparagine glycan is linked to Asn-445. Cysteines 531 and 579 form a disulfide.

Belongs to the tyrosinase family. Hemocyanin subfamily. Tarantula hemocyanin is a 24-chain polymer with seven different chains identified. Hemolymph.

Its subcellular location is the secreted. The protein resides in the extracellular space. Functionally, hemocyanins are copper-containing oxygen carriers occurring freely dissolved in the hemolymph of many mollusks and arthropods. The sequence is that of Hemocyanin D chain (HCD) from Aphonopelma sp. (American tarantula).